A 211-amino-acid polypeptide reads, in one-letter code: Imidazole glycerol phosphate synthase subunit HisH (211 aa).

The 211-residue stretch at 1-211 (MIGIIDYGMG…ASIIEGKGSM (211 aa)) folds into the Glutamine amidotransferase type-1 domain. The Nucleophile role is filled by Cys-79. Residues His-186 and Glu-188 contribute to the active site.

As to quaternary structure, heterodimer of HisH and HisF.

The protein localises to the cytoplasm. The catalysed reaction is 5-[(5-phospho-1-deoxy-D-ribulos-1-ylimino)methylamino]-1-(5-phospho-beta-D-ribosyl)imidazole-4-carboxamide + L-glutamine = D-erythro-1-(imidazol-4-yl)glycerol 3-phosphate + 5-amino-1-(5-phospho-beta-D-ribosyl)imidazole-4-carboxamide + L-glutamate + H(+). The enzyme catalyses L-glutamine + H2O = L-glutamate + NH4(+). It participates in amino-acid biosynthesis; L-histidine biosynthesis; L-histidine from 5-phospho-alpha-D-ribose 1-diphosphate: step 5/9. Its function is as follows. IGPS catalyzes the conversion of PRFAR and glutamine to IGP, AICAR and glutamate. The HisH subunit catalyzes the hydrolysis of glutamine to glutamate and ammonia as part of the synthesis of IGP and AICAR. The resulting ammonia molecule is channeled to the active site of HisF. The protein is Imidazole glycerol phosphate synthase subunit HisH of Geobacillus sp. (strain WCH70).